The following is a 366-amino-acid chain: Ribosomal RNA large subunit methyltransferase M (366 aa).

Residues serine 188, 221 to 224, aspartate 240, aspartate 260, and aspartate 277 contribute to the S-adenosyl-L-methionine site; that span reads CPGG. Residue lysine 306 is the Proton acceptor of the active site.

It belongs to the class I-like SAM-binding methyltransferase superfamily. RNA methyltransferase RlmE family. RlmM subfamily. Monomer.

The protein localises to the cytoplasm. It carries out the reaction cytidine(2498) in 23S rRNA + S-adenosyl-L-methionine = 2'-O-methylcytidine(2498) in 23S rRNA + S-adenosyl-L-homocysteine + H(+). Its function is as follows. Catalyzes the 2'-O-methylation at nucleotide C2498 in 23S rRNA. The sequence is that of Ribosomal RNA large subunit methyltransferase M from Salmonella dublin (strain CT_02021853).